A 442-amino-acid polypeptide reads, in one-letter code: uncharacterized protein (442 aa).

A disordered region spans residues 211–269 (LDYSTDKPEDSESEDIELEDSESEDSESEDIDQHGGQGPDDDEFNANFDDPQFDEFDFG). The span at 221-240 (SESEDIELEDSESEDSESED) shows a compositional bias: acidic residues.

The protein localises to the virion. This is an uncharacterized protein from Acanthamoeba polyphaga (Amoeba).